The following is a 624-amino-acid chain: Chaperone protein HtpG (624 aa).

Residues 1-336 (MNMKGQETRG…SNDLPLNVSR (336 aa)) are a; substrate-binding. The segment at 337–552 (EILQDSRITQ…ADEMSTQMAK (216 aa)) is b. Residues 553-624 (LFAAAGQQAP…IRRMNQLLTA (72 aa)) are c.

The protein belongs to the heat shock protein 90 family. Homodimer.

It localises to the cytoplasm. Its function is as follows. Molecular chaperone. Has ATPase activity. This is Chaperone protein HtpG from Yersinia pestis bv. Antiqua (strain Antiqua).